The chain runs to 297 residues: ATP synthase subunit a (297 aa).

8 consecutive transmembrane segments (helical) span residues 38–58 (PLIP…IAIL), 77–97 (GYVL…VDLL), 107–127 (LFII…VGGI), 133–153 (SSTV…IMGV), 174–194 (TIPL…LLSI), 202–222 (VLAG…FFTL), 230–250 (VGLV…HVYF), and 252–272 (ILVS…YWSQ).

Belongs to the ATPase A chain family. In terms of assembly, F-type ATPases have 2 components, CF(1) - the catalytic core - and CF(0) - the membrane proton channel. CF(1) has five subunits: alpha(3), beta(3), gamma(1), delta(1), epsilon(1). CF(0) has three main subunits: a(1), b(2) and c(9-12). The alpha and beta chains form an alternating ring which encloses part of the gamma chain. CF(1) is attached to CF(0) by a central stalk formed by the gamma and epsilon chains, while a peripheral stalk is formed by the delta and b chains.

The protein resides in the cell membrane. Its function is as follows. Key component of the proton channel; it plays a direct role in the translocation of protons across the membrane. The protein is ATP synthase subunit a of Mycoplasmoides gallisepticum (strain R(low / passage 15 / clone 2)) (Mycoplasma gallisepticum).